Here is a 359-residue protein sequence, read N- to C-terminus: Beta-hexosaminidase (359 aa).

Substrate contacts are provided by residues Asp64, Arg72, Arg138, and 168–169; that span reads KH. Catalysis depends on His181, which acts as the Proton donor/acceptor. Residue Asp252 is the Nucleophile of the active site.

Belongs to the glycosyl hydrolase 3 family. NagZ subfamily.

The protein resides in the cytoplasm. It catalyses the reaction Hydrolysis of terminal non-reducing N-acetyl-D-hexosamine residues in N-acetyl-beta-D-hexosaminides.. Its pathway is cell wall biogenesis; peptidoglycan recycling. Plays a role in peptidoglycan recycling by cleaving the terminal beta-1,4-linked N-acetylglucosamine (GlcNAc) from peptide-linked peptidoglycan fragments, giving rise to free GlcNAc, anhydro-N-acetylmuramic acid and anhydro-N-acetylmuramic acid-linked peptides. The protein is Beta-hexosaminidase of Thiobacillus denitrificans (strain ATCC 25259 / T1).